Reading from the N-terminus, the 1025-residue chain is Error-prone DNA polymerase (1025 aa).

It belongs to the DNA polymerase type-C family. DnaE2 subfamily.

The protein resides in the cytoplasm. It catalyses the reaction DNA(n) + a 2'-deoxyribonucleoside 5'-triphosphate = DNA(n+1) + diphosphate. In terms of biological role, DNA polymerase involved in damage-induced mutagenesis and translesion synthesis (TLS). It is not the major replicative DNA polymerase. The protein is Error-prone DNA polymerase of Alkalilimnicola ehrlichii (strain ATCC BAA-1101 / DSM 17681 / MLHE-1).